We begin with the raw amino-acid sequence, 620 residues long: Chaperone protein HscA homolog (620 aa).

The protein belongs to the heat shock protein 70 family.

In terms of biological role, chaperone involved in the maturation of iron-sulfur cluster-containing proteins. Has a low intrinsic ATPase activity which is markedly stimulated by HscB. The polypeptide is Chaperone protein HscA homolog (Colwellia psychrerythraea (strain 34H / ATCC BAA-681) (Vibrio psychroerythus)).